Consider the following 466-residue polypeptide: Putative proline/betaine transporter (466 aa).

12 helical membrane-spanning segments follow: residues 20-42 (VVAT…YTTA), 63-83 (FAAL…FGII), 91-111 (VVLT…GLLP), 116-136 (IGLW…FSTG), 164-184 (IGTL…TFFL), 191-211 (SFGW…GLYL), 247-267 (IFVC…VTAY), 285-305 (VLIT…GKLA), 313-332 (VFLI…FMLL), 337-354 (FVVI…LSTY), 377-397 (VTFN…ATWL), and 405-425 (LAPA…ITFL).

The protein belongs to the major facilitator superfamily. Metabolite:H+ Symporter (MHS) family (TC 2.A.1.6) family.

Its subcellular location is the cell membrane. In terms of biological role, may be a proton symporter involved in the uptake of osmolytes such as proline and glycine betaine. The chain is Putative proline/betaine transporter (proP) from Staphylococcus aureus (strain Mu3 / ATCC 700698).